The sequence spans 198 residues: 8-oxoguanine DNA glycosylase/AP lyase (198 aa).

Residues K122 and D140 contribute to the active site.

The protein belongs to the type-2 OGG1 family. Monomer.

The enzyme catalyses 2'-deoxyribonucleotide-(2'-deoxyribose 5'-phosphate)-2'-deoxyribonucleotide-DNA = a 3'-end 2'-deoxyribonucleotide-(2,3-dehydro-2,3-deoxyribose 5'-phosphate)-DNA + a 5'-end 5'-phospho-2'-deoxyribonucleoside-DNA + H(+). Catalyzes the excision of an oxidatively damaged form of guanine (7,8-dihydro-8-oxoguanine = 8-oxoG) from DNA. Also cleaves the DNA backbone at apurinic/apyrimidinic sites (AP sites). Efficiently cleaves oligomers containing 8-oxoG:C and 8-oxoG:G base pairs, and is less effective on oligomers containing 8-oxoG:T and 8-oxoG:A mispairs. In Archaeoglobus fulgidus (strain ATCC 49558 / DSM 4304 / JCM 9628 / NBRC 100126 / VC-16), this protein is 8-oxoguanine DNA glycosylase/AP lyase.